A 206-amino-acid chain; its full sequence is Glutathione S-transferase 1 (206 aa).

One can recognise a GST N-terminal domain in the interval 2 to 79 (PQYKLTYFDI…YLGRQFGLAG (78 aa)). Glutathione-binding positions include tyrosine 8, tryptophan 39, lysine 43, 49–51 (GQL), and 63–64 (QS). One can recognise a GST C-terminal domain in the interval 81–206 (TPMEEAQVDS…WIAERPKTPY (126 aa)).

Belongs to the GST superfamily. Sigma family.

It catalyses the reaction RX + glutathione = an S-substituted glutathione + a halide anion + H(+). Functionally, conjugation of reduced glutathione to a wide number of exogenous and endogenous hydrophobic electrophiles. Can also function as a GSH peroxidase. The polypeptide is Glutathione S-transferase 1 (GST1) (Ascaris suum (Pig roundworm)).